Consider the following 186-residue polypeptide: Adenylate kinase (186 aa).

Residue 12-17 coordinates ATP; the sequence is GAGKGT. An NMP region spans residues 32 to 61; sequence STGDLLRAEVNAQSPLGKEAALIMNKGELV. AMP-binding positions include threonine 33, arginine 38, 59-61, 86-89, and glutamine 93; these read ELV and GFPR. Residues 127–133 are LID; it reads SRGRSDD. Arginine 128 is an ATP binding site. AMP contacts are provided by arginine 130 and arginine 141. Glycine 169 is an ATP binding site.

This sequence belongs to the adenylate kinase family. In terms of assembly, monomer.

It is found in the cytoplasm. It catalyses the reaction AMP + ATP = 2 ADP. It functions in the pathway purine metabolism; AMP biosynthesis via salvage pathway; AMP from ADP: step 1/1. Functionally, catalyzes the reversible transfer of the terminal phosphate group between ATP and AMP. Plays an important role in cellular energy homeostasis and in adenine nucleotide metabolism. The chain is Adenylate kinase from Prochlorococcus marinus (strain MIT 9211).